We begin with the raw amino-acid sequence, 809 residues long: G-type lectin S-receptor-like serine/threonine-protein kinase At1g61480 (809 aa).

A signal peptide spans 1 to 24 (MGKKRIMFFASLLLITIFLSFSYA). The region spanning 25–144 (GITRESPLSI…NSGRTLWESF (120 aa)) is the Bulb-type lectin domain. The Extracellular portion of the chain corresponds to 25-425 (GITRESPLSI…SELGGNKRNK (401 aa)). N-linked (GlcNAc...) asparagine glycans are attached at residues Asn-53, Asn-88, Asn-94, Asn-103, Asn-117, Asn-134, and Asn-236. One can recognise an EGF-like domain in the interval 278–314 (PENSCDIYGFCGPFGICVMSVPPKCKCFKGFVPKSIE). Disulfide bonds link Cys-282–Cys-294 and Cys-288–Cys-302. N-linked (GlcNAc...) asparagine glycans are attached at residues Asn-320 and Asn-375. The 83-residue stretch at 333-415 (CQGNTNGKTV…GEILSIRLAS (83 aa)) folds into the PAN domain. Disulfide bonds link Cys-368/Cys-389 and Cys-372/Cys-378. The chain crosses the membrane as a helical span at residues 426 to 446 (IIVASIVSLSLFVILAFAAFC). The Cytoplasmic portion of the chain corresponds to 447-809 (FLRYKVKHTV…EMTQSVILGR (363 aa)). A Protein kinase domain is found at 496 to 781 (FSLSNKLGQG…DLTSPKQPTF (286 aa)). ATP contacts are provided by residues 502–510 (LGQGGFGSV) and Lys-524. Phosphoserine occurs at positions 530 and 545. Residues 585 to 602 (RKRLEIDWPKRFNIIEGI) form a caM-binding region. Asp-621 acts as the Proton acceptor in catalysis. Phosphoserine is present on residues Ser-625 and Ser-638. Thr-655 is subject to Phosphothreonine. Ser-698 and Ser-792 each carry phosphoserine.

The protein belongs to the protein kinase superfamily. Ser/Thr protein kinase family.

It localises to the cell membrane. The enzyme catalyses L-seryl-[protein] + ATP = O-phospho-L-seryl-[protein] + ADP + H(+). The catalysed reaction is L-threonyl-[protein] + ATP = O-phospho-L-threonyl-[protein] + ADP + H(+). The polypeptide is G-type lectin S-receptor-like serine/threonine-protein kinase At1g61480 (Arabidopsis thaliana (Mouse-ear cress)).